A 214-amino-acid chain; its full sequence is dITP/XTP pyrophosphatase (214 aa).

16–21 (THNPGK) is a binding site for substrate. 2 residues coordinate Mg(2+): Asp-48 and Asp-77. Asp-77 serves as the catalytic Proton acceptor. Residues Ser-78, 163–166 (FGYD), Lys-186, and 198–199 (HR) contribute to the substrate site.

Belongs to the HAM1 NTPase family. Homodimer. Mg(2+) serves as cofactor.

The catalysed reaction is XTP + H2O = XMP + diphosphate + H(+). It catalyses the reaction dITP + H2O = dIMP + diphosphate + H(+). The enzyme catalyses ITP + H2O = IMP + diphosphate + H(+). Functionally, pyrophosphatase that catalyzes the hydrolysis of nucleoside triphosphates to their monophosphate derivatives, with a high preference for the non-canonical purine nucleotides XTP (xanthosine triphosphate), dITP (deoxyinosine triphosphate) and ITP. Seems to function as a house-cleaning enzyme that removes non-canonical purine nucleotides from the nucleotide pool, thus preventing their incorporation into DNA/RNA and avoiding chromosomal lesions. This is dITP/XTP pyrophosphatase from Bradyrhizobium sp. (strain BTAi1 / ATCC BAA-1182).